The primary structure comprises 164 residues: Crossover junction endodeoxyribonuclease RuvC (164 aa).

Active-site residues include Asp7, Glu67, and Asp140. The Mg(2+) site is built by Asp7, Glu67, and Asp140.

It belongs to the RuvC family. As to quaternary structure, homodimer which binds Holliday junction (HJ) DNA. The HJ becomes 2-fold symmetrical on binding to RuvC with unstacked arms; it has a different conformation from HJ DNA in complex with RuvA. In the full resolvosome a probable DNA-RuvA(4)-RuvB(12)-RuvC(2) complex forms which resolves the HJ. The cofactor is Mg(2+).

Its subcellular location is the cytoplasm. The catalysed reaction is Endonucleolytic cleavage at a junction such as a reciprocal single-stranded crossover between two homologous DNA duplexes (Holliday junction).. In terms of biological role, the RuvA-RuvB-RuvC complex processes Holliday junction (HJ) DNA during genetic recombination and DNA repair. Endonuclease that resolves HJ intermediates. Cleaves cruciform DNA by making single-stranded nicks across the HJ at symmetrical positions within the homologous arms, yielding a 5'-phosphate and a 3'-hydroxyl group; requires a central core of homology in the junction. The consensus cleavage sequence is 5'-(A/T)TT(C/G)-3'. Cleavage occurs on the 3'-side of the TT dinucleotide at the point of strand exchange. HJ branch migration catalyzed by RuvA-RuvB allows RuvC to scan DNA until it finds its consensus sequence, where it cleaves and resolves the cruciform DNA. The polypeptide is Crossover junction endodeoxyribonuclease RuvC (Alkaliphilus oremlandii (strain OhILAs) (Clostridium oremlandii (strain OhILAs))).